The primary structure comprises 186 residues: CRS2-like protein, chloroplastic (186 aa).

A chloroplast-targeting transit peptide spans 1 to 49 (MAMTAASVFGSGGCLELLTSSKAMRGKLWTRLAPFISKRHASTSQTSLS). Tyr73 contacts tRNA. His78 acts as the Proton acceptor in catalysis. Residues Tyr123, Asn125, and Asn171 each coordinate tRNA.

Belongs to the PTH family.

Its subcellular location is the plastid. It is found in the chloroplast. The chain is CRS2-like protein, chloroplastic from Oryza sativa subsp. japonica (Rice).